The following is a 347-amino-acid chain: Quinolinate synthase (347 aa).

Iminosuccinate-binding residues include His-47 and Ser-68. Position 113 (Cys-113) interacts with [4Fe-4S] cluster. Residues 139–141 (YAN) and Ser-156 each bind iminosuccinate. Cys-200 contacts [4Fe-4S] cluster. Iminosuccinate is bound by residues 226-228 (HPE) and Thr-243. Cys-297 serves as a coordination point for [4Fe-4S] cluster.

The protein belongs to the quinolinate synthase family. Type 1 subfamily. [4Fe-4S] cluster is required as a cofactor.

The protein localises to the cytoplasm. The catalysed reaction is iminosuccinate + dihydroxyacetone phosphate = quinolinate + phosphate + 2 H2O + H(+). It participates in cofactor biosynthesis; NAD(+) biosynthesis; quinolinate from iminoaspartate: step 1/1. In terms of biological role, catalyzes the condensation of iminoaspartate with dihydroxyacetone phosphate to form quinolinate. In Shigella boydii serotype 18 (strain CDC 3083-94 / BS512), this protein is Quinolinate synthase.